The primary structure comprises 222 residues: Protein GrpE (222 aa).

A disordered region spans residues 1 to 64 (MSDQNLGQGS…GEEILSDDDL (64 aa)). The span at 16–44 (EEPIVRDKRRIDPETGKVREPQDLSHEEL) shows a compositional bias: basic and acidic residues. Acidic residues predominate over residues 54–64 (QGEEILSDDDL).

Belongs to the GrpE family. In terms of assembly, homodimer.

The protein resides in the cytoplasm. In terms of biological role, participates actively in the response to hyperosmotic and heat shock by preventing the aggregation of stress-denatured proteins, in association with DnaK and GrpE. It is the nucleotide exchange factor for DnaK and may function as a thermosensor. Unfolded proteins bind initially to DnaJ; upon interaction with the DnaJ-bound protein, DnaK hydrolyzes its bound ATP, resulting in the formation of a stable complex. GrpE releases ADP from DnaK; ATP binding to DnaK triggers the release of the substrate protein, thus completing the reaction cycle. Several rounds of ATP-dependent interactions between DnaJ, DnaK and GrpE are required for fully efficient folding. The protein is Protein GrpE of Leifsonia xyli subsp. xyli (strain CTCB07).